A 52-amino-acid chain; its full sequence is Stable plasmid inheritance protein (52 aa).

A helical membrane pass occupies residues 6–26; the sequence is SSLVWCVLIVCLTLLIFTYLT.

This sequence belongs to the Hok/Gef family.

It localises to the cell inner membrane. Toxic component of a type I toxin-antitoxin (TA) system. Part of the plasmid maintenance system, encodes a toxic protein that collapses the transmembrane potential and arrests respiration. When the adjacent non-translated flmB (sok) gene is disrupted FlmA no longer functions in plasmid maintenance (i.e. FlmB probably encodes an antisense antitoxin RNA). Translation of FlmA may be coupled to the upstream flmC gene. The protein is Stable plasmid inheritance protein (flmA) of Escherichia coli O157:H7.